Here is a 154-residue protein sequence, read N- to C-terminus: Myoglobin (154 aa).

Positions 2 to 148 (GLSDGEWQLV…FRNDMAAKYK (147 aa)) constitute a Globin domain. The residue at position 4 (serine 4) is a Phosphoserine. Histidine 65 contributes to the nitrite binding site. Histidine 65 contributes to the O2 binding site. Threonine 68 carries the post-translational modification Phosphothreonine. A heme b-binding site is contributed by histidine 94.

The protein belongs to the globin family. As to quaternary structure, monomeric.

It is found in the cytoplasm. The protein localises to the sarcoplasm. The catalysed reaction is Fe(III)-heme b-[protein] + nitric oxide + H2O = Fe(II)-heme b-[protein] + nitrite + 2 H(+). The enzyme catalyses H2O2 + AH2 = A + 2 H2O. Its function is as follows. Monomeric heme protein which primary function is to store oxygen and facilitate its diffusion within muscle tissues. Reversibly binds oxygen through a pentacoordinated heme iron and enables its timely and efficient release as needed during periods of heightened demand. Depending on the oxidative conditions of tissues and cells, and in addition to its ability to bind oxygen, it also has a nitrite reductase activity whereby it regulates the production of bioactive nitric oxide. Under stress conditions, like hypoxia and anoxia, it also protects cells against reactive oxygen species thanks to its pseudoperoxidase activity. This Ornithorhynchus anatinus (Duckbill platypus) protein is Myoglobin (MB).